A 470-amino-acid chain; its full sequence is Neuraminidase (470 aa).

Residues 1 to 6 are Intravirion-facing; that stretch reads MNPNQK. Residues 7 to 29 traverse the membrane as a helical segment; that stretch reads IITIGSVSIVLTTVGLLLQITSL. Positions 11–33 are involved in apical transport and lipid raft association; sequence GSVSIVLTTVGLLLQITSLCSIW. Over 30–470 the chain is Virion surface; it reads CSIWFSHYNQ…GALLPFDIDK (441 aa). A hypervariable stalk region region spans residues 36-88; that stretch reads HYNQVTQTNGQPCSNDTINYYNETFVNVTNVQNNYTTITEPSIPQAIHYSSGR. 4 N-linked (GlcNAc...) asparagine; by host glycosylation sites follow: N50, N57, N62, and N69. The interval 90–470 is head of neuraminidase; that stretch reads LCPVKGWAPL…GALLPFDIDK (381 aa). 8 cysteine pairs are disulfide-bonded: C91-C418, C123-C128, C183-C230, C232-C237, C278-C291, C280-C289, C317-C334, and C422-C447. R117 provides a ligand contact to substrate. The N-linked (GlcNAc...) asparagine; by host glycan is linked to N145. The active-site Proton donor/acceptor is the D150. Residue R151 participates in substrate binding. Residue 276 to 277 coordinates substrate; the sequence is EE. R292 contributes to the substrate binding site. Ca(2+) is bound by residues D293, G297, and D323. R369 provides a ligand contact to substrate. An N-linked (GlcNAc...) asparagine; by host glycan is attached at N399. Y403 acts as the Nucleophile in catalysis. The N-linked (GlcNAc...) asparagine; by host glycan is linked to N417.

It belongs to the glycosyl hydrolase 34 family. Homotetramer. Requires Ca(2+) as cofactor. Post-translationally, N-glycosylated.

The protein resides in the virion membrane. It is found in the host apical cell membrane. The catalysed reaction is Hydrolysis of alpha-(2-&gt;3)-, alpha-(2-&gt;6)-, alpha-(2-&gt;8)- glycosidic linkages of terminal sialic acid residues in oligosaccharides, glycoproteins, glycolipids, colominic acid and synthetic substrates.. Its activity is regulated as follows. Inhibited by the neuraminidase inhibitors zanamivir (Relenza) and oseltamivir (Tamiflu). These drugs interfere with the release of progeny virus from infected cells and are effective against all influenza strains. Resistance to neuraminidase inhibitors is quite rare. Catalyzes the removal of terminal sialic acid residues from viral and cellular glycoconjugates. Cleaves off the terminal sialic acids on the glycosylated HA during virus budding to facilitate virus release. Additionally helps virus spread through the circulation by further removing sialic acids from the cell surface. These cleavages prevent self-aggregation and ensure the efficient spread of the progeny virus from cell to cell. Otherwise, infection would be limited to one round of replication. Described as a receptor-destroying enzyme because it cleaves a terminal sialic acid from the cellular receptors. May facilitate viral invasion of the upper airways by cleaving the sialic acid moieties on the mucin of the airway epithelial cells. Likely to plays a role in the budding process through its association with lipid rafts during intracellular transport. May additionally display a raft-association independent effect on budding. Plays a role in the determination of host range restriction on replication and virulence. Sialidase activity in late endosome/lysosome traffic seems to enhance virus replication. This Aves protein is Neuraminidase.